The primary structure comprises 128 residues: Iron-sulfur cluster insertion protein ErpA (128 aa).

Residues Cys56, Cys120, and Cys122 each contribute to the iron-sulfur cluster site.

The protein belongs to the HesB/IscA family. In terms of assembly, homodimer. Requires iron-sulfur cluster as cofactor.

Functionally, required for insertion of 4Fe-4S clusters for at least IspG. The chain is Iron-sulfur cluster insertion protein ErpA from Xanthomonas axonopodis pv. citri (strain 306).